A 172-amino-acid chain; its full sequence is Stellate protein CG33236/CG33240/CG33244/CG33245 (172 aa).

The protein belongs to the casein kinase 2 subunit beta family. Interacts in vitro with the casein kinase 2 alpha subunit (CkII-alpha). The relevance of such interaction is however unclear in vivo. As to expression, probably not expressed in wild-type flies. In males lacking the Y chromosome, it is testis-specific and constitutes the main component of star-shaped crystals.

Functionally, unknown. In males lacking the Y chromosome, its strong overexpression leads to the appearance of proteinaceous star-shaped crystals in the primary spermatocytes causing meiotic drive, possibly by interfering with normal casein kinase 2 activity. This Drosophila melanogaster (Fruit fly) protein is Stellate protein CG33236/CG33240/CG33244/CG33245 (Ste:CG33236).